A 111-amino-acid chain; its full sequence is Large ribosomal subunit protein uL24 (111 aa).

It belongs to the universal ribosomal protein uL24 family. Part of the 50S ribosomal subunit.

In terms of biological role, one of two assembly initiator proteins, it binds directly to the 5'-end of the 23S rRNA, where it nucleates assembly of the 50S subunit. Functionally, one of the proteins that surrounds the polypeptide exit tunnel on the outside of the subunit. The sequence is that of Large ribosomal subunit protein uL24 from Streptococcus pneumoniae (strain Hungary19A-6).